Consider the following 324-residue polypeptide: NAD(P)H-dependent D-xylose reductase xyl1 (324 aa).

The active-site Proton donor is Y50. Position 112 (H112) interacts with substrate. Residues 168-169 (SN), 217-226 (SSFGPTGFME), and 273-283 (KTSRPEVMAQN) contribute to the NAD(+) site.

It belongs to the aldo/keto reductase family.

It carries out the reaction an alditol + NAD(+) = an aldose + NADH + H(+). It catalyses the reaction an alditol + NADP(+) = an aldose + NADPH + H(+). The enzyme catalyses xylitol + NAD(+) = D-xylose + NADH + H(+). The catalysed reaction is xylitol + NADP(+) = D-xylose + NADPH + H(+). It functions in the pathway carbohydrate metabolism; D-xylose degradation. It participates in carbohydrate degradation; L-arabinose degradation via L-arabinitol; D-xylulose 5-phosphate from L-arabinose (fungal route): step 1/5. Its function is as follows. Catalyzes the initial reaction in the xylose utilization pathway by reducing D-xylose into xylitol. Xylose is a major component of hemicelluloses such as xylan. Most fungi utilize D-xylose via three enzymatic reactions, xylose reductase (XR), xylitol dehydrogenase (XDH), and xylulokinase, to form xylulose 5-phosphate, which enters pentose phosphate pathway. Also major aldose reductase in pentose and D-galactose catabolism. Reduces the pentose L-arabinose and the hexose D-galactose to their respective polyols. Responsible for extracellular beta-galactosidase formation and cellulase induction during growth on lactose. The protein is NAD(P)H-dependent D-xylose reductase xyl1 (xyl1) of Hypocrea jecorina (Trichoderma reesei).